A 381-amino-acid polypeptide reads, in one-letter code: Heme A synthase (381 aa).

The tract at residues 1–23 is disordered; that stretch reads MARRPVFQEVTETTPPGTTPSGG. Over residues 11–23 the composition is skewed to low complexity; sequence TETTPPGTTPSGG. Transmembrane regions (helical) follow at residues 34–54, 120–140, 151–171, 185–205, 228–248, 285–305, 319–339, and 342–362; these read GAIRLWLVVLFVMVAAMIALG, RLLGRLVGLVWAAGFVFFLAT, LLLLGALGGAQGAIGWWMVHS, LATHLGLAFAILGLIAWYVLA, TTGLMHLAFVQILLGALVAGI, LVQFIHRMTGYLLAVFAVVVF, AYVAMLVALAVQVALGIMNVL, and SPLPLALAHQIGAVALFTLIL. His290 contacts heme. Heme is bound at residue His350.

This sequence belongs to the COX15/CtaA family. Type 2 subfamily. Interacts with CtaB. Heme b serves as cofactor.

It localises to the cell membrane. The catalysed reaction is Fe(II)-heme o + 2 A + H2O = Fe(II)-heme a + 2 AH2. It participates in porphyrin-containing compound metabolism; heme A biosynthesis; heme A from heme O: step 1/1. Its function is as follows. Catalyzes the conversion of heme O to heme A by two successive hydroxylations of the methyl group at C8. The first hydroxylation forms heme I, the second hydroxylation results in an unstable dihydroxymethyl group, which spontaneously dehydrates, resulting in the formyl group of heme A. This chain is Heme A synthase, found in Paracoccus denitrificans (strain Pd 1222).